Consider the following 434-residue polypeptide: Nicotinate phosphoribosyltransferase (434 aa).

At His242 the chain carries Phosphohistidine; by autocatalysis.

It belongs to the NAPRTase family. Transiently phosphorylated on a His residue during the reaction cycle. Phosphorylation strongly increases the affinity for substrates and increases the rate of nicotinate D-ribonucleotide production. Dephosphorylation regenerates the low-affinity form of the enzyme, leading to product release.

The catalysed reaction is nicotinate + 5-phospho-alpha-D-ribose 1-diphosphate + ATP + H2O = nicotinate beta-D-ribonucleotide + ADP + phosphate + diphosphate. It participates in cofactor biosynthesis; NAD(+) biosynthesis; nicotinate D-ribonucleotide from nicotinate: step 1/1. Its function is as follows. Catalyzes the synthesis of beta-nicotinate D-ribonucleotide from nicotinate and 5-phospho-D-ribose 1-phosphate at the expense of ATP. In Brucella abortus (strain S19), this protein is Nicotinate phosphoribosyltransferase.